Here is an 848-residue protein sequence, read N- to C-terminus: DNA mismatch repair protein MutS (848 aa).

Residue 610 to 617 (GPNMGGKS) coordinates ATP.

The protein belongs to the DNA mismatch repair MutS family.

Functionally, this protein is involved in the repair of mismatches in DNA. It is possible that it carries out the mismatch recognition step. This protein has a weak ATPase activity. This chain is DNA mismatch repair protein MutS, found in Francisella philomiragia subsp. philomiragia (strain ATCC 25017 / CCUG 19701 / FSC 153 / O#319-036).